The sequence spans 99 residues: Integration host factor subunit alpha (99 aa).

It belongs to the bacterial histone-like protein family. In terms of assembly, heterodimer of an alpha and a beta chain.

Functionally, this protein is one of the two subunits of integration host factor, a specific DNA-binding protein that functions in genetic recombination as well as in transcriptional and translational control. This chain is Integration host factor subunit alpha, found in Nitrosococcus oceani (strain ATCC 19707 / BCRC 17464 / JCM 30415 / NCIMB 11848 / C-107).